Reading from the N-terminus, the 75-residue chain is Large ribosomal subunit protein uL30 (75 aa).

The protein belongs to the universal ribosomal protein uL30 family. Part of the 50S ribosomal subunit.

The protein is Large ribosomal subunit protein uL30 of Roseiflexus castenholzii (strain DSM 13941 / HLO8).